The chain runs to 363 residues: Branched-chain-amino-acid aminotransferase 2 (363 aa).

N6-(pyridoxal phosphate)lysine is present on K197.

The protein belongs to the class-IV pyridoxal-phosphate-dependent aminotransferase family. The cofactor is pyridoxal 5'-phosphate.

The enzyme catalyses L-leucine + 2-oxoglutarate = 4-methyl-2-oxopentanoate + L-glutamate. The catalysed reaction is L-isoleucine + 2-oxoglutarate = (S)-3-methyl-2-oxopentanoate + L-glutamate. It carries out the reaction L-valine + 2-oxoglutarate = 3-methyl-2-oxobutanoate + L-glutamate. It functions in the pathway amino-acid biosynthesis; L-isoleucine biosynthesis; L-isoleucine from 2-oxobutanoate: step 4/4. It participates in amino-acid biosynthesis; L-leucine biosynthesis; L-leucine from 3-methyl-2-oxobutanoate: step 4/4. Its pathway is amino-acid biosynthesis; L-valine biosynthesis; L-valine from pyruvate: step 4/4. With respect to regulation, inhibited by canaline. In terms of biological role, transaminates branched-chain amino acids and ketoglutarate. This Bacillus subtilis (strain 168) protein is Branched-chain-amino-acid aminotransferase 2 (ilvK).